A 751-amino-acid polypeptide reads, in one-letter code: Lysine decarboxylase LdcA (751 aa).

It belongs to the Orn/Lys/Arg decarboxylase class-I family. Homodecamer.

It carries out the reaction L-lysine + H(+) = cadaverine + CO2. Functionally, plays an essential role in lysine utilization by acting as a lysine decarboxylase. This is Lysine decarboxylase LdcA from Pseudomonas aeruginosa (strain ATCC 15692 / DSM 22644 / CIP 104116 / JCM 14847 / LMG 12228 / 1C / PRS 101 / PAO1).